The chain runs to 643 residues: Threonine--tRNA ligase (643 aa).

Positions 1 to 61 constitute a TGS domain; that stretch reads MIEIFIEDLN…NQSGNLKFLK (61 aa). Positions 246–539 are catalytic; that stretch reads DHRKIGKDLE…LLEHYAGFLP (294 aa). Residues Cys339, His390, and His516 each contribute to the Zn(2+) site.

It belongs to the class-II aminoacyl-tRNA synthetase family. Homodimer. The cofactor is Zn(2+).

It localises to the cytoplasm. The catalysed reaction is tRNA(Thr) + L-threonine + ATP = L-threonyl-tRNA(Thr) + AMP + diphosphate + H(+). Catalyzes the attachment of threonine to tRNA(Thr) in a two-step reaction: L-threonine is first activated by ATP to form Thr-AMP and then transferred to the acceptor end of tRNA(Thr). Also edits incorrectly charged L-seryl-tRNA(Thr). In Sulfurihydrogenibium sp. (strain YO3AOP1), this protein is Threonine--tRNA ligase.